The primary structure comprises 124 residues: Large ribosomal subunit protein bL12 (124 aa).

The interval 93-124 (GAPSTVKEGASKDEAEEAKKKLEEAGASVELK) is disordered. The span at 101–116 (GASKDEAEEAKKKLEE) shows a compositional bias: basic and acidic residues.

This sequence belongs to the bacterial ribosomal protein bL12 family. Homodimer. Part of the ribosomal stalk of the 50S ribosomal subunit. Forms a multimeric L10(L12)X complex, where L10 forms an elongated spine to which 2 to 4 L12 dimers bind in a sequential fashion. Binds GTP-bound translation factors.

Forms part of the ribosomal stalk which helps the ribosome interact with GTP-bound translation factors. Is thus essential for accurate translation. In Marinobacter nauticus (strain ATCC 700491 / DSM 11845 / VT8) (Marinobacter aquaeolei), this protein is Large ribosomal subunit protein bL12.